Consider the following 484-residue polypeptide: Glycogen synthase 2 (484 aa).

Arg15 lines the ADP-alpha-D-glucose pocket.

The protein belongs to the glycosyltransferase 1 family. Bacterial/plant glycogen synthase subfamily.

It catalyses the reaction [(1-&gt;4)-alpha-D-glucosyl](n) + ADP-alpha-D-glucose = [(1-&gt;4)-alpha-D-glucosyl](n+1) + ADP + H(+). The protein operates within glycan biosynthesis; glycogen biosynthesis. In terms of biological role, synthesizes alpha-1,4-glucan chains using ADP-glucose. This chain is Glycogen synthase 2, found in Geobacter sulfurreducens (strain ATCC 51573 / DSM 12127 / PCA).